Consider the following 209-residue polypeptide: MAAVRRRERDVVEENGVTTTTVKRRKMEEEVDLVESRIILSPCVQATNRGGIVARNSAGASETSVVIVRRRDSPPVEEQCQIEEEDSSVSCCSTSEEKSKRRIEFVDLEENNGDDRETETSWIYDDLNKSEESMNMDSSSVAVEDVESRRRLRKSLHETVKEAELEDFFQVAEKDLRNKLLECSMKYNFDFEKDEPLGGGRYEWVKLNP.

A required for nuclear localization region spans residues methionine 1–aspartate 32.

Belongs to the CDI family. ICK/KRP subfamily. Specifically interacts with CDKA-1, but not with CDKB1-1. In terms of processing, phosphorylated.

It localises to the nucleus. The protein localises to the nucleoplasm. Binds and inhibits CYCD2-1/CDKA-1 complex kinase activity. Regulates cell division which is crucial for plant growth, development and morphogenesis. May regulate early lateral root initiation by blocking the G1/S phase transition. Controls the mitosis-to-endocycle transition and the onset of the endoreduplication cycle during leaf development through inhibition of mitotic CDKA-1 kinase complexes. Specifically targets CDKA-1. This Arabidopsis thaliana (Mouse-ear cress) protein is Cyclin-dependent kinase inhibitor 2 (KRP2).